A 595-amino-acid chain; its full sequence is ATP-dependent lipid A-core flippase (595 aa).

Residues 1–20 (MSQAYQPDSTKTSAKKSSAV) form a disordered region. Low complexity predominate over residues 9–19 (STKTSAKKSSA). 4 consecutive transmembrane segments (helical) span residues 41–61 (WWAILLTITGFAINAGTEIWI), 81–101 (GLFPFIIVMLFFVRGVGSFLG), 169–189 (VIALMGFLLYSNWRLTLILFV), and 266–286 (INTPAVQLLMAVAMAVVVWLA). In terms of domain architecture, ABC transmembrane type-1 spans 45–326 (LLTITGFAIN…LTDVNQQLQR (282 aa)). Residues 357 to 592 (IKLDNISLVY…HGHYAQMYAR (236 aa)) form the ABC transporter domain. 390–397 (GRSGAGKS) contacts ATP.

This sequence belongs to the ABC transporter superfamily. Lipid exporter (TC 3.A.1.106) family. As to quaternary structure, homodimer.

Its subcellular location is the cell inner membrane. It catalyses the reaction ATP + H2O + lipid A-core oligosaccharideSide 1 = ADP + phosphate + lipid A-core oligosaccharideSide 2.. Functionally, involved in lipopolysaccharide (LPS) biosynthesis. Translocates lipid A-core from the inner to the outer leaflet of the inner membrane. Transmembrane domains (TMD) form a pore in the inner membrane and the ATP-binding domain (NBD) is responsible for energy generation. This is ATP-dependent lipid A-core flippase from Psychrobacter arcticus (strain DSM 17307 / VKM B-2377 / 273-4).